The chain runs to 326 residues: Tetraacyldisaccharide 4'-kinase (326 aa).

52–59 (TLGGAGKT) provides a ligand contact to ATP.

Belongs to the LpxK family.

The enzyme catalyses a lipid A disaccharide + ATP = a lipid IVA + ADP + H(+). It participates in glycolipid biosynthesis; lipid IV(A) biosynthesis; lipid IV(A) from (3R)-3-hydroxytetradecanoyl-[acyl-carrier-protein] and UDP-N-acetyl-alpha-D-glucosamine: step 6/6. Its function is as follows. Transfers the gamma-phosphate of ATP to the 4'-position of a tetraacyldisaccharide 1-phosphate intermediate (termed DS-1-P) to form tetraacyldisaccharide 1,4'-bis-phosphate (lipid IVA). The polypeptide is Tetraacyldisaccharide 4'-kinase (Methylobacterium radiotolerans (strain ATCC 27329 / DSM 1819 / JCM 2831 / NBRC 15690 / NCIMB 10815 / 0-1)).